The chain runs to 106 residues: UPF0145 protein APL_0465 (106 aa).

This sequence belongs to the UPF0145 family.

This chain is UPF0145 protein APL_0465, found in Actinobacillus pleuropneumoniae serotype 5b (strain L20).